The sequence spans 133 residues: Triatox (133 aa).

An N-terminal signal peptide occupies residues M1–V22. Residues T23–E125 form the CUB domain. C70 and C86 are joined by a disulfide.

The protein belongs to the venom CUB family. As to expression, expressed by the venom gland.

The protein localises to the secreted. Its function is as follows. May function as an antimicrobial peptide and may be related to the innate defense of the insect in the salivary glands. The sequence is that of Triatox from Triatoma infestans (Assassin bug).